Consider the following 238-residue polypeptide: Probable transcriptional regulatory protein VS_II1504 (238 aa).

It belongs to the TACO1 family.

The protein resides in the cytoplasm. The polypeptide is Probable transcriptional regulatory protein VS_II1504 (Vibrio atlanticus (strain LGP32) (Vibrio splendidus (strain Mel32))).